The following is a 730-amino-acid chain: Dual function macrocyclase-peptidase POPB (730 aa).

Active-site charge relay system residues include S577, D661, and H698.

It belongs to the peptidase S9A family. As to quaternary structure, monomer. In terms of tissue distribution, expressed in the pileus (cap) and lamellae where it colocalizes with amanitin.

It carries out the reaction Hydrolysis of Pro-|-Xaa &gt;&gt; Ala-|-Xaa in oligopeptides.. In terms of biological role, dual function macrocyclase-peptidase involved in the biosynthesis of the highly toxic amanitin toxin family of macrocycles. Cleaves peptide bonds on the C-terminal side of prolyl residues. The enzyme first removes 10 residues from the N-terminus of a 35-residue substrate. Conformational trapping of the 25 amino-acid peptide forces the enzyme to release this intermediate rather than proceed to macrocyclization. The enzyme rebinds the 25 amino-acid peptide in a different conformation and catalyzes macrocyclization of the N-terminal eight residues. This Amanita bisporigera (Destroying angel) protein is Dual function macrocyclase-peptidase POPB.